Here is a 361-residue protein sequence, read N- to C-terminus: Phospho-N-acetylmuramoyl-pentapeptide-transferase (361 aa).

10 helical membrane passes run 28–48 (LAVLVTLSLSFLIGPRLIKFL), 74–94 (TMGGIMIILSSCFSTLLLADL), 99–119 (IWITLFGFVSFGIIGFLDDYA), 135–155 (LLLQGIISLIVCILLEYTIDS), 167–187 (SLSMDLGYLYIFFAIFVIVGA), 203–223 (VPIALTAGSFALISYLVGNLI), 236–256 (TGELTIFCASIVGSCLGFLWF), 263–283 (VFMGDTGSLSLGGVLGIISVI), 288–308 (IVLGIVGGLFVIETISVIMQV), and 338–358 (KVVIRFWIISLIFVLIGLSSL).

This sequence belongs to the glycosyltransferase 4 family. MraY subfamily. Mg(2+) serves as cofactor.

The protein resides in the cell inner membrane. The enzyme catalyses UDP-N-acetyl-alpha-D-muramoyl-L-alanyl-gamma-D-glutamyl-meso-2,6-diaminopimeloyl-D-alanyl-D-alanine + di-trans,octa-cis-undecaprenyl phosphate = di-trans,octa-cis-undecaprenyl diphospho-N-acetyl-alpha-D-muramoyl-L-alanyl-D-glutamyl-meso-2,6-diaminopimeloyl-D-alanyl-D-alanine + UMP. Its pathway is cell wall biogenesis; peptidoglycan biosynthesis. Catalyzes the initial step of the lipid cycle reactions in the biosynthesis of the cell wall peptidoglycan: transfers peptidoglycan precursor phospho-MurNAc-pentapeptide from UDP-MurNAc-pentapeptide onto the lipid carrier undecaprenyl phosphate, yielding undecaprenyl-pyrophosphoryl-MurNAc-pentapeptide, known as lipid I. This chain is Phospho-N-acetylmuramoyl-pentapeptide-transferase, found in Rickettsia bellii (strain RML369-C).